The sequence spans 639 residues: MAKVIGIDLGTTNSCVAIMDGSQPRVIENAEGARTTPSIVAFTDDERLAGQSAKRQAVTNPENTIFGVKRLIGRRINDEHLEKDKKNLPFEIVDGGNGDAWVKAKGETYSPSQISAFILQKMKETAESYLGEDVTQAVITVPAYFNDAQRQATKDAGKIAGLEVLRIINEPTAAALAYGLDKKETRTIAVYDLGGGTFDVTILEIDDGLFEVKSTNGDTFLGGEDFDMRIVNYLAEEFKKENSVDLTQDKMALQRLKEAAEKAKIELSSASQTEINQPFISMGSNGQPLHMVMKLTRAKLESLVGDLIKASIKPCAAALKDAGLSKGDIDEVVLVGGMTRMPKVIDEVTKFFGKEPHKGVNPDEVVAMGAAIQAGVLQGDVKDVVLLDVTPLSMGIETLGGVFTRLIDRNTTIPTKKSQIFSTADDNQSAVTLRVFQGEREMAADNKILGQFNLEGIPPAPRGVPQIEVTFDIDANGIVSVGAKDKGTGKEQQITIQASGGLSDDDIEAMVREAEENAEADKDRKDLVETRNQAESLVHGTEKSLEEHGEKVDPSTVEAIELALGALKETLETDDTAKIKGGIQNVTEAAMRLGEAIYKAEADKAEAAQDGAPEEEERGVDEDIVDADFEDLDDDRKRG.

A Phosphothreonine; by autocatalysis modification is found at T197. Composition is skewed to basic and acidic residues over residues A514–E529 and G540–D553. 2 disordered regions span residues A514–P554 and D603–G639. A compositionally biased stretch (acidic residues) spans A612–D633.

The protein belongs to the heat shock protein 70 family.

Acts as a chaperone. This chain is Chaperone protein DnaK, found in Jannaschia sp. (strain CCS1).